The primary structure comprises 69 residues: Sec-independent protein translocase protein TatA (69 aa).

A helical membrane pass occupies residues 1–21 (MFPKLGMGELVVILLIVVILF). The segment at 43–69 (SFSGEDEEKPSTPGATSSDEASKAKQA) is disordered.

It belongs to the TatA/E family. In terms of assembly, the Tat system comprises two distinct complexes: a TatABC complex, containing multiple copies of TatA, TatB and TatC subunits, and a separate TatA complex, containing only TatA subunits. Substrates initially bind to the TatABC complex, which probably triggers association of the separate TatA complex to form the active translocon.

It is found in the cell inner membrane. Functionally, part of the twin-arginine translocation (Tat) system that transports large folded proteins containing a characteristic twin-arginine motif in their signal peptide across membranes. TatA could form the protein-conducting channel of the Tat system. The polypeptide is Sec-independent protein translocase protein TatA (Anaeromyxobacter sp. (strain Fw109-5)).